A 352-amino-acid polypeptide reads, in one-letter code: D-alanine--D-alanine ligase (352 aa).

Residues 133 to 342 (KTVFAAAGLP…FPKLVDRLIQ (210 aa)) form the ATP-grasp domain. 169 to 224 (DETIGYPNFVKPANLGSSVGISKVRSRLELEAALDSAASFDRRIVVEAGVVAREVE) lines the ATP pocket. Positions 295, 309, and 311 each coordinate Mg(2+).

Belongs to the D-alanine--D-alanine ligase family. Mg(2+) is required as a cofactor. It depends on Mn(2+) as a cofactor.

The protein localises to the cytoplasm. It catalyses the reaction 2 D-alanine + ATP = D-alanyl-D-alanine + ADP + phosphate + H(+). It participates in cell wall biogenesis; peptidoglycan biosynthesis. Functionally, cell wall formation. The sequence is that of D-alanine--D-alanine ligase from Acaryochloris marina (strain MBIC 11017).